A 365-amino-acid polypeptide reads, in one-letter code: MGRKKIQISRILDQRNRQVTFTKRKFGLMKKAYELSVLCDCEIALIIFNSANRLFQYASTDMDRVLLKYTEYSEPHESRTNTDILETLKRRGIGLDGPELEPDEGPEEPGEKFRRLAGEGGDPALPRPRLYPAAPAMPSPDVVYGALPPPGCDPSGLGEALPAQSRPSPFRPAAPKAGPPGLVHPLFSPSHLTSKTPPPLYLPTEGRRSDLPGGLAGPRGGLNTSRSLYSGLQNPCSTATPGPPLGSFPFLPGGPPVGAEAWARRVPQPAAPPRRPPQSASSLSASLRPPGAPATFLRPSPIPCSSPGPWQSLCGLGPPCAGCPWPTAGPGRRSPGGTSPERSPGTARARGDPTSLQASSEKTQQ.

The 55-residue stretch at Arg3–Tyr57 folds into the MADS-box domain. Residues Ala58–Glu86 constitute a DNA-binding region (mef2-type). 3 disordered regions span residues Gly94–Ala124, Val142–Pro309, and Ala321–Gln365. Over residues Pro98 to Glu108 the composition is skewed to acidic residues. Polar residues predominate over residues Asn223–Thr240. Composition is skewed to low complexity over residues Pro277–Pro289 and Pro326–Thr346. Polar residues predominate over residues Thr354–Gln365.

The protein belongs to the MEF2 family. Interacts with HDAC7. Heterodimer. Interacts with HDAC9. As to expression, expressed in skeletal and cardiac muscle and brain.

The protein localises to the nucleus. Transcriptional activator which binds specifically to the MEF2 element, 5'-YTA[AT](4)TAR-3', found in numerous muscle-specific genes. Activates transcription via this element. May be involved in muscle-specific and/or growth factor-related transcription. This Homo sapiens (Human) protein is Myocyte-specific enhancer factor 2B (MEF2B).